The chain runs to 97 residues: Large ribosomal subunit protein uL23 (97 aa).

The protein belongs to the universal ribosomal protein uL23 family. Part of the 50S ribosomal subunit. Contacts protein L29, and trigger factor when it is bound to the ribosome.

In terms of biological role, one of the early assembly proteins it binds 23S rRNA. One of the proteins that surrounds the polypeptide exit tunnel on the outside of the ribosome. Forms the main docking site for trigger factor binding to the ribosome. This chain is Large ribosomal subunit protein uL23, found in Limosilactobacillus fermentum (strain NBRC 3956 / LMG 18251) (Lactobacillus fermentum).